Here is a 120-residue protein sequence, read N- to C-terminus: uncharacterized protein (120 aa).

This is an uncharacterized protein from Archaeoglobus fulgidus (strain ATCC 49558 / DSM 4304 / JCM 9628 / NBRC 100126 / VC-16).